A 213-amino-acid polypeptide reads, in one-letter code: Large ribosomal subunit protein uL3 (213 aa).

Belongs to the universal ribosomal protein uL3 family. As to quaternary structure, part of the 50S ribosomal subunit. Forms a cluster with proteins L14 and L19.

One of the primary rRNA binding proteins, it binds directly near the 3'-end of the 23S rRNA, where it nucleates assembly of the 50S subunit. In Kosmotoga olearia (strain ATCC BAA-1733 / DSM 21960 / TBF 19.5.1), this protein is Large ribosomal subunit protein uL3.